Reading from the N-terminus, the 272-residue chain is MAEHRFEDFNGLVMYRKNYKEKDMLVKILTDRFGKKMFYLRGANKPKFRLSAAILPFTQAEYGGDIRDDGLSFLNNVKSATQFQTISQDLFLNAYATYILNLIDVGFPDSEPLGIWYDKVEQALNLIDEGFDAAMITHIIEIQLLQVFGVQPQLQGCAVCGRTDLAFDYSESYGGLLCQRHWHLDPNRFHSSQRAIYYLRLFSVIDLFKIQSVNVKEATQVELKMIIDRLYQDTVGLSLKSKQFIDKMYSFDSQLPQLKKVPSEIDSTPKDD.

Belongs to the RecO family.

Involved in DNA repair and RecF pathway recombination. This is DNA repair protein RecO from Latilactobacillus sakei subsp. sakei (strain 23K) (Lactobacillus sakei subsp. sakei).